The chain runs to 101 residues: Small ribosomal subunit protein bS18c (101 aa).

The span at Met1–Leu19 shows a compositional bias: basic residues. The disordered stretch occupies residues Met1 to Gly23.

The protein belongs to the bacterial ribosomal protein bS18 family. Part of the 30S ribosomal subunit.

The protein resides in the plastid. The protein localises to the chloroplast. In Acorus gramineus (Dwarf sweet flag), this protein is Small ribosomal subunit protein bS18c.